We begin with the raw amino-acid sequence, 213 residues long: Kynurenine formamidase (213 aa).

Tryptophan 20 contacts substrate. The Zn(2+) site is built by histidine 50, histidine 54, and aspartate 56. The active-site Proton donor/acceptor is histidine 60. Zn(2+) contacts are provided by histidine 161 and glutamate 173.

Belongs to the Cyclase 1 superfamily. KynB family. Homodimer. Zn(2+) is required as a cofactor.

It carries out the reaction N-formyl-L-kynurenine + H2O = L-kynurenine + formate + H(+). Its pathway is amino-acid degradation; L-tryptophan degradation via kynurenine pathway; L-kynurenine from L-tryptophan: step 2/2. Its function is as follows. Catalyzes the hydrolysis of N-formyl-L-kynurenine to L-kynurenine, the second step in the kynurenine pathway of tryptophan degradation. The protein is Kynurenine formamidase of Pseudomonas paraeruginosa (strain DSM 24068 / PA7) (Pseudomonas aeruginosa (strain PA7)).